A 295-amino-acid polypeptide reads, in one-letter code: 4-hydroxy-tetrahydrodipicolinate synthase (295 aa).

T47 serves as a coordination point for pyruvate. Residue Y135 is the Proton donor/acceptor of the active site. K163 serves as the catalytic Schiff-base intermediate with substrate. I206 is a pyruvate binding site.

It belongs to the DapA family. In terms of assembly, homodimer.

It localises to the cytoplasm. It carries out the reaction L-aspartate 4-semialdehyde + pyruvate = (2S,4S)-4-hydroxy-2,3,4,5-tetrahydrodipicolinate + H2O + H(+). Its pathway is amino-acid biosynthesis; L-lysine biosynthesis via DAP pathway; (S)-tetrahydrodipicolinate from L-aspartate: step 3/4. In terms of biological role, catalyzes the condensation of (S)-aspartate-beta-semialdehyde [(S)-ASA] and pyruvate to 4-hydroxy-tetrahydrodipicolinate (HTPA). The polypeptide is 4-hydroxy-tetrahydrodipicolinate synthase (Staphylococcus aureus (strain Mu50 / ATCC 700699)).